The following is a 618-amino-acid chain: Probable Xaa-Pro aminopeptidase P (618 aa).

Aspartate 414, aspartate 425, glutamate 523, and glutamate 537 together coordinate Mn(2+).

Belongs to the peptidase M24B family. Requires Mn(2+) as cofactor.

The catalysed reaction is Release of any N-terminal amino acid, including proline, that is linked to proline, even from a dipeptide or tripeptide.. Functionally, catalyzes the removal of a penultimate prolyl residue from the N-termini of peptides. This Metarhizium acridum (strain CQMa 102) protein is Probable Xaa-Pro aminopeptidase P (AMPP).